The following is a 459-amino-acid chain: Ribulose bisphosphate carboxylase (459 aa).

Residue asparagine 111 coordinates substrate. Residue lysine 166 is the Proton acceptor of the active site. A substrate-binding site is contributed by lysine 168. Mg(2+) contacts are provided by lysine 191, aspartate 193, and glutamate 194. Lysine 191 bears the N6-carboxylysine mark. Histidine 287 serves as the catalytic Proton acceptor. Residues arginine 288, histidine 321, and serine 368 each coordinate substrate.

Belongs to the RuBisCO large chain family. Type II subfamily. In terms of assembly, homodimer. Requires Mg(2+) as cofactor.

It localises to the cytoplasm. The catalysed reaction is 2 (2R)-3-phosphoglycerate + 2 H(+) = D-ribulose 1,5-bisphosphate + CO2 + H2O. It catalyses the reaction D-ribulose 1,5-bisphosphate + O2 = 2-phosphoglycolate + (2R)-3-phosphoglycerate + 2 H(+). Functionally, ruBisCO catalyzes two reactions: the carboxylation of D-ribulose 1,5-bisphosphate, the primary event in carbon dioxide fixation, as well as the oxidative fragmentation of the pentose substrate. Both reactions occur simultaneously and in competition at the same active site. The protein is Ribulose bisphosphate carboxylase of Halothiobacillus neapolitanus (strain ATCC 23641 / c2) (Thiobacillus neapolitanus).